The primary structure comprises 1123 residues: Ubiquitin carboxyl-terminal hydrolase 36 (1123 aa).

Basic and acidic residues-rich tracts occupy residues 1–19 and 69–90; these read MPIV…KDSA and GASR…EHTY. Disordered stretches follow at residues 1–22 and 67–95; these read MPIV…ADDG and TEGA…SCGD. The region spanning 122–423 is the USP domain; the sequence is AGLHNLGNTC…QAYVLFYLRI (302 aa). C131 functions as the Nucleophile in the catalytic mechanism. H382 serves as the catalytic Proton acceptor. A phosphoserine mark is found at S429 and S464. Positions 430-577 are disordered; the sequence is PEGLISRTGS…RQGSWDSRDV (148 aa). The segment covering 491-503 has biased composition (polar residues); sequence RNGSTLGLKSQNG. Residues 510-519 are compositionally biased toward low complexity; sequence PSGSPSPKLS. Residue S546 is modified to Phosphoserine. The span at 557-571 shows a compositional bias: low complexity; that stretch reads SNSNSSRSGSQRQGS. At S582 the chain carries Phosphoserine. A disordered region spans residues 589–999; sequence ATANGHGLKG…ESSSCAPSAN (411 aa). A compositionally biased stretch (basic and acidic residues) spans 597–609; it reads KGNDESAGLDRRG. Residues 610-623 are compositionally biased toward low complexity; it reads SSSSSPEHSASSDS. A compositionally biased stretch (polar residues) spans 640–654; sequence SQETNCSTAGHSKTP. S667 carries the phosphoserine modification. A compositionally biased stretch (polar residues) spans 669–681; it reads VLSNTTTEPASTM. Position 682 is a phosphoserine (S682). A compositionally biased stretch (low complexity) spans 687–697; it reads KKLALSAKKAS. S713 and S742 each carry phosphoserine. The segment covering 773 to 785 has biased composition (polar residues); that stretch reads EPRSCSSISTALP. Basic residues predominate over residues 841–850; the sequence is HGKRKRKKKK. Over residues 891–902 the composition is skewed to polar residues; the sequence is GTQPQVNGQQVG. S952 carries the post-translational modification Phosphoserine. Over residues 963–975 the composition is skewed to basic and acidic residues; it reads QETQRAVEEDGHL.

Belongs to the peptidase C19 family. In terms of assembly, interacts with isoform 3 of FBXW7; the interaction inhibits MYC degradation induced by SCF(FBW7) complex. Interacts with NTRK1; USP36 does not deubiquitinate NTRK1. Interacts with NEDD4L (via domains WW1, 3 and 4); the interaction inhibits ubiquitination of, at least, NTRK1, KCNQ2 and KCNQ3 by NEDD4L. Interacts (via C-terminus) with EXOSC10 (via C-terminus); the interaction is facilitated by the association with RNA and promotes sumoylation of EXOSC10. In terms of processing, polyubiquitinated by NEDD4L, no effect on USP36 protein levels. Both proteins interact with and regulate each other's ubiquitination levels. Broadly expressed.

The protein resides in the nucleus. It localises to the nucleolus. It is found in the cytoplasm. It catalyses the reaction Thiol-dependent hydrolysis of ester, thioester, amide, peptide and isopeptide bonds formed by the C-terminal Gly of ubiquitin (a 76-residue protein attached to proteins as an intracellular targeting signal).. Its function is as follows. Deubiquitinase essential for the regulation of nucleolar structure and function. Required for cell and organism viability. Plays an important role in ribosomal RNA processing and protein synthesis, which is mediated, at least in part, through deubiquitination of DHX33, NPM1 and FBL, regulating their protein stability. Functions as a transcriptional repressor by deubiquiting histone H2B at the promoters of genes critical for cellular differentiation, such as CDKN1A, thereby preventing histone H3 'Lys-4' trimethylation (H3K4). Specifically deubiquitinates MYC in the nucleolus, leading to prevent MYC degradation by the proteasome: acts by specifically interacting with isoform 3 of FBXW7 (FBW7gamma) in the nucleolus and counteracting ubiquitination of MYC by the SCF(FBW7) complex. In contrast, it does not interact with isoform 1 of FBXW7 (FBW7alpha) in the nucleoplasm. Interacts to and regulates the actions of E3 ubiquitin-protein ligase NEDD4L over substrates such as NTRK1, KCNQ2 and KCNQ3, affecting their expression an functions. Deubiquitinates SOD2, regulates SOD2 protein stability. Deubiquitinase activity is required to control selective autophagy activation by ubiquitinated proteins. Promotes CEP63 stabilization through 'Lys-48'-linked deubiquitination leading to increased stability. Acts as a SUMO ligase to promote EXOSC10 sumoylation critical for the nucleolar RNA exosome function in rRNA processing. Binds to pre-rRNAs. In Homo sapiens (Human), this protein is Ubiquitin carboxyl-terminal hydrolase 36.